A 348-amino-acid polypeptide reads, in one-letter code: Isopentenyl-diphosphate delta-isomerase (348 aa).

9–10 (RK) is a substrate binding site. FMN is bound by residues 68–70 (AMT), S98, and N127. Q157 is a substrate binding site. Mg(2+) is bound at residue E158. Residues K188, S213, T218, and 286-287 (AG) each bind FMN.

The protein belongs to the IPP isomerase type 2 family. As to quaternary structure, homooctamer. Dimer of tetramers. FMN is required as a cofactor. It depends on NADPH as a cofactor. Requires Mg(2+) as cofactor.

It is found in the cytoplasm. It carries out the reaction isopentenyl diphosphate = dimethylallyl diphosphate. Its function is as follows. Involved in the biosynthesis of isoprenoids. Catalyzes the 1,3-allylic rearrangement of the homoallylic substrate isopentenyl (IPP) to its allylic isomer, dimethylallyl diphosphate (DMAPP). The sequence is that of Isopentenyl-diphosphate delta-isomerase from Limosilactobacillus reuteri (strain DSM 20016) (Lactobacillus reuteri).